The sequence spans 406 residues: MAKGEFVRTKPHVNVGTIGHVDHGKTTLTAALTYVAAAENPNVEVKDYGDIDKAPEERARGITINTAHVEYETAKRHYSHVDCPGHADYIKNMITGAAQMDGAILVVSAADGPMPQTREHILLARQVGVPYIVVFMNKVDMVDDPELLDLVEMEVRDLLNQYEFPGDEVPVIRGSALLALEQMHRNPKTRRGENEWVDKIWELLDAIDEYIPTPVRDVDKPFLMPVEDVFTITGRGTVATGRIERGKVKVGDEVEIVGLAPETRRTVVTGVEMHRKTLQEGIAGDNVGVLLRGVSREEVERGQVLAKPGSITPHTKFEASVYVLKKEEGGRHTGFFSGYRPQFYFRTTDVTGVVQLPPGVEMVMPGDNVTFTVELIKPVALEEGLRFAIREGGRTVGAGVVTKILE.

The tr-type G domain occupies 10 to 215 (KPHVNVGTIG…AIDEYIPTPV (206 aa)). Positions 19–26 (GHVDHGKT) are G1. Position 19–26 (19–26 (GHVDHGKT)) interacts with GTP. A Mg(2+)-binding site is contributed by Thr-26. A G2 region spans residues 61-65 (GITIN). The G3 stretch occupies residues 82–85 (DCPG). Residues 82 to 86 (DCPGH) and 137 to 140 (NKVD) contribute to the GTP site. Positions 137–140 (NKVD) are G4. The segment at 175–177 (SAL) is G5. A Phosphothreonine modification is found at Thr-395.

This sequence belongs to the TRAFAC class translation factor GTPase superfamily. Classic translation factor GTPase family. EF-Tu/EF-1A subfamily. As to quaternary structure, monomer. Binds to the 70S ribosome, contacts tmRNA during trans-translation. In terms of processing, phosphorylated on a threonine.

It localises to the cytoplasm. It carries out the reaction GTP + H2O = GDP + phosphate + H(+). In terms of biological role, GTP hydrolase that promotes the GTP-dependent binding of aminoacyl-tRNA to the A-site of ribosomes during protein biosynthesis. Its function is as follows. EF-Tu-GDP binds to the acceptor arm of tmRNA by interacting with its acceptor arm, suggesting that GTP hydrolysis by EF-Tu is essential for tmRNA function. Functionally, protects glycyl-tRNA(Gly) from hydrolysis by E.coli D-aminoacyl-tRNA deacylase (dtd). This is Elongation factor Tu-A from Thermus thermophilus (strain ATCC 27634 / DSM 579 / HB8).